Consider the following 310-residue polypeptide: MEPEVIRDKDSMRKWSRAMRSQGKTIGLVPTMGYLHEGHLSLVRQSLALTDVTVVSIYVNPGQFSPTEDLSTYPSDFSGDLTKLAALSGGKVVVFNPKNLYDYGGETKKINDGGGNGGRVVSCVEEGGLGHETWIRVERLEKGFCGKSRPVFFRGVATIVTKLFNIVEPDVALFGKKDYQQWRIIQRMVRDLNFGIEIVGSDIAREKDGLAMSSRNVRLSDEERQRALSISRSLAMAKASVAEGKTNCAELKDMIIQQVVGSAGRVDYVEIVDQETLEGVEEIKSGVVICVAAWFGTVRLIDNIEINVSL.

32-39 (MGYLHEGH) is an ATP binding site. The active-site Proton donor is the His-39. Residue Gln-63 participates in (R)-pantoate binding. Position 63 (Gln-63) interacts with beta-alanine. 175 to 178 (GKKD) lines the ATP pocket. Gln-181 is a binding site for (R)-pantoate. 212–215 (MSSR) lines the ATP pocket.

The protein belongs to the pantothenate synthetase family. In terms of assembly, homodimer. As to expression, expressed in roots, cotyledons, leaves, stems, cauline leaves, stigma, sepals and petals.

It is found in the cytoplasm. The protein localises to the cytosol. It catalyses the reaction (R)-pantoate + beta-alanine + ATP = (R)-pantothenate + AMP + diphosphate + H(+). The protein operates within cofactor biosynthesis; (R)-pantothenate biosynthesis; (R)-pantothenate from (R)-pantoate and beta-alanine: step 1/1. With respect to regulation, enzyme kinetics do not match Michaelis-Menten kinetics, suggesting allosteric behavior. Inhibited by high pantoate levels. Catalyzes the condensation of pantoate with beta-alanine to form pantothenate. Essential for panthotenate biosynthesis. This is Pantoate--beta-alanine ligase from Arabidopsis thaliana (Mouse-ear cress).